We begin with the raw amino-acid sequence, 607 residues long: MLSYISAAFQSPSPDEGVQQRPPRYVGEDTTPTSRREILGWYSYGIAAEVFAVCGVGSFLPLTLEQLARERGTLQTSRLPCVGPSAGNSTNATEHGQCVVPVFGLEINTASFAMYTFSLAVLIQALTLISFSALADYENNRKTLLMVFGFAGALASMLFVFIAPPLFVIGSILVVVGVTCLGSSFVVLNSYLPVLVANDPSLQEGKADDGTEMSSFDRDEGDSEGNPWGKDHTDNDSLDGLQPSDQPQSSLEGGMGTKAPLSSSPELQLSTKISSRGIGLGYCAAVFVQIISIIMLLTLSKTKLAKVSATLPMRFVLLLVGIWWGAFTLVTRNLLKTRPGPRLDTVSTKGTGRWRAWLRLVGFAWKSLWETVKVVSKLREVLIFLVAWFLLSDAMATVSGTAILFARTELKLSTPLIGLLSITATLSGMTGAFLWPQVSRYFRLQPSHTIILCIALFEMIPLYGLLAYIPFIKNWGVFGLQQPWEIFPLAIVHGVVSGGLASYCRSFFGLLIPPGSEAAFYALYAATDKGSSFIGPAIVGGIVDATGQIRSGFFFMAILIVLPIPLVWMVNADKGRREGLAMAETLGKSHGGPAEDAQEAEGLLARE.

The interval 9-31 (FQSPSPDEGVQQRPPRYVGEDTT) is disordered. The helical transmembrane segment at 44 to 64 (YGIAAEVFAVCGVGSFLPLTL) threads the bilayer. N-linked (GlcNAc...) asparagine glycosylation is found at Asn88 and Asn91. Helical transmembrane passes span 111–131 (SFAMYTFSLAVLIQALTLISF), 143–160 (TLLMVFGFAGALASMLFV), and 161–178 (FIAPPLFVIGSILVVVGV). The segment at 203-263 (QEGKADDGTE…GMGTKAPLSS (61 aa)) is disordered. The N-linked (GlcNAc...) asparagine glycan is linked to Asn235. Transmembrane regions (helical) follow at residues 277–297 (GIGLGYCAAVFVQIISIIMLL), 310–330 (TLPMRFVLLLVGIWWGAFTLV), 381–401 (VLIFLVAWFLLSDAMATVSGT), 415–435 (PLIGLLSITATLSGMTGAFLW), 450–470 (IILCIALFEMIPLYGLLAYIP), 484–504 (WEIFPLAIVHGVVSGGLASYC), 521–543 (YALYAATDKGSSFIGPAIVGGIV), and 552–572 (GFFFMAILIVLPIPLVWMVNA). Residues 585 to 607 (TLGKSHGGPAEDAQEAEGLLARE) are disordered.

It belongs to the ATG22 family.

The protein resides in the vacuole membrane. Its function is as follows. Vacuolar effluxer which mediate the efflux of amino acids resulting from autophagic degradation. The release of autophagic amino acids allows the maintenance of protein synthesis and viability during nitrogen starvation. This is Autophagy-related protein 22-2 (atg22-2) from Penicillium rubens (strain ATCC 28089 / DSM 1075 / NRRL 1951 / Wisconsin 54-1255) (Penicillium chrysogenum).